A 690-amino-acid chain; its full sequence is Proprotein convertase subtilisin/kexin type 9 (690 aa).

The signal sequence occupies residues M1 to A28. A propeptide spanning residues Q29–Q150 is cleaved from the precursor. The residue at position 36 (Y36) is a Sulfotyrosine. S45 is subject to Phosphoserine. An Inhibitor I9 domain is found at T75–V147. A Peptidase S8 domain is found at P153–W459. Residues D184 and H224 each act as charge relay system in the active site. 2 disulfides stabilise this stretch: C221-C253 and C321-C356. S384 (charge relay system) is an active-site residue. A C-terminal domain region spans residues G448–Q690. Intrachain disulfides connect C455–C525, C475–C524, and C484–C507. Residue N531 is glycosylated (N-linked (GlcNAc...) asparagine). Cystine bridges form between C532–C599, C550–C598, C560–C586, C606–C677, C624–C676, and C633–C652. S686 carries the post-translational modification Phosphoserine.

Belongs to the peptidase S8 family. Monomer. Can self-associate to form dimers and higher multimers which may have increased LDLR degrading activity. The precursor protein but not the mature protein may form multimers. Interacts with APOB, VLDLR, LRP8/APOER2 and BACE1. The full-length immature form (pro-PCSK9) interacts with SCNN1A, SCNN1B and SCNN1G. The pro-PCSK9 form (via C-terminal domain) interacts with LDLR. Interacts (via the C-terminal domain) with ANXA2 (via repeat Annexin 1); the interaction inhibits the degradation of LDLR. The cofactor is Ca(2+). Cleavage by furin and PCSK5 generates a truncated inactive protein that is unable to induce LDLR degradation. Post-translationally, undergoes autocatalytic cleavage in the endoplasmic reticulum to release the propeptide from the N-terminus and the cleavage of the propeptide is strictly required for its maturation and activation. The cleaved propeptide however remains associated with the catalytic domain through non-covalent interactions, preventing potential substrates from accessing its active site. As a result, it is secreted from cells as a propeptide-containing, enzymatically inactive protein. In terms of processing, phosphorylation protects the propeptide against proteolysis.

It localises to the cytoplasm. Its subcellular location is the secreted. It is found in the endosome. The protein resides in the lysosome. The protein localises to the cell surface. It localises to the endoplasmic reticulum. Its subcellular location is the golgi apparatus. Its activity is regulated as follows. Its proteolytic activity is autoinhibited by the non-covalent binding of the propeptide to the catalytic domain. Inhibited by EGTA. Its function is as follows. Crucial player in the regulation of plasma cholesterol homeostasis. Binds to low-density lipid receptor family members: low density lipoprotein receptor (LDLR), very low density lipoprotein receptor (VLDLR), apolipoprotein E receptor (LRP1/APOER) and apolipoprotein receptor 2 (LRP8/APOER2), and promotes their degradation in intracellular acidic compartments. Acts via a non-proteolytic mechanism to enhance the degradation of the hepatic LDLR through a clathrin LDLRAP1/ARH-mediated pathway. May prevent the recycling of LDLR from endosomes to the cell surface or direct it to lysosomes for degradation. Can induce ubiquitination of LDLR leading to its subsequent degradation. Inhibits intracellular degradation of APOB via the autophagosome/lysosome pathway in a LDLR-independent manner. Involved in the disposal of non-acetylated intermediates of BACE1 in the early secretory pathway. Inhibits epithelial Na(+) channel (ENaC)-mediated Na(+) absorption by reducing ENaC surface expression primarily by increasing its proteasomal degradation. Regulates neuronal apoptosis via modulation of LRP8/APOER2 levels and related anti-apoptotic signaling pathways. This Callithrix jacchus (White-tufted-ear marmoset) protein is Proprotein convertase subtilisin/kexin type 9 (PCSK9).